Consider the following 244-residue polypeptide: Phosphoribosylaminoimidazole-succinocarboxamide synthase (244 aa).

It belongs to the SAICAR synthetase family.

The enzyme catalyses 5-amino-1-(5-phospho-D-ribosyl)imidazole-4-carboxylate + L-aspartate + ATP = (2S)-2-[5-amino-1-(5-phospho-beta-D-ribosyl)imidazole-4-carboxamido]succinate + ADP + phosphate + 2 H(+). Its pathway is purine metabolism; IMP biosynthesis via de novo pathway; 5-amino-1-(5-phospho-D-ribosyl)imidazole-4-carboxamide from 5-amino-1-(5-phospho-D-ribosyl)imidazole-4-carboxylate: step 1/2. In Prochlorococcus marinus (strain SARG / CCMP1375 / SS120), this protein is Phosphoribosylaminoimidazole-succinocarboxamide synthase.